Consider the following 957-residue polypeptide: Kinesin heavy chain isoform 5C (957 aa).

The 320-residue stretch at 8–327 (SIKVMCRFRP…LMFGQRAKTI (320 aa)) folds into the Kinesin motor domain. ATP contacts are provided by Gln87, Ser89, Ser90, Gly91, Lys92, Thr93, His94, and Lys99. The microtubule-binding stretch occupies residues 174-315 (VSSPEEVMDV…PSVFNEAETK (142 aa)). The stretch at 406-923 (VAGISTEEKE…ARRAHSAQIA (518 aa)) forms a coiled coil. Residues 859–956 (RCELPKLEKR…GSSSNSTHYQ (98 aa)) are globular. The segment at 911-957 (KNMARRAHSAQIAKPIRPGHYPASSPTAVHAIRGGGGSSSNSTHYQK) is disordered.

The protein belongs to the TRAFAC class myosin-kinesin ATPase superfamily. Kinesin family. Kinesin subfamily. Oligomer composed of two heavy chains and two light chains. Interacts with GRIP1 and KLC3. Interacts with TRAK1. Interacts with ZFYVE27. Highest expression in brain, prostate and testis, and moderate expression in kidney, small intestine and ovary.

Its subcellular location is the cytoplasm. The protein localises to the cytoskeleton. The protein resides in the cell projection. It is found in the dendrite. It carries out the reaction ATP + H2O = ADP + phosphate + H(+). Its function is as follows. Microtubule-associated force-producing protein that may play a role in organelle transport. Has ATPase activity. Involved in synaptic transmission. Mediates dendritic trafficking of mRNAs. Required for anterograde axonal transportation of MAPK8IP3/JIP3 which is essential for MAPK8IP3/JIP3 function in axon elongation. The sequence is that of Kinesin heavy chain isoform 5C (KIF5C) from Homo sapiens (Human).